A 93-amino-acid chain; its full sequence is C-C motif chemokine 17 (93 aa).

The N-terminal stretch at 1 to 23 (MMSLQMLLLAALLLGTSLQHASA) is a signal peptide. Disulfide bonds link Cys33–Cys57 and Cys34–Cys73.

It belongs to the intercrine beta (chemokine CC) family.

It localises to the secreted. In terms of biological role, chemokine, which displays chemotactic activity for T lymphocytes, preferentially Th2 cells, but not monocytes or granulocytes. Therefore plays an important role in a wide range of inflammatory and immunological processes. Acts by binding to CCR4 at T-cell surface. Mediates GM-CSF/CSF2-driven pain and inflammation. In the brain, required to maintain the typical, highly branched morphology of hippocampal microglia under homeostatic conditions. May be important for the appropriate adaptation of microglial morphology and synaptic plasticity to acute lipopolysaccharide (LPS)-induced neuroinflammation. Plays a role in wound healing, mainly by inducing fibroblast migration into the wound. This is C-C motif chemokine 17 (Ccl17) from Rattus norvegicus (Rat).